The primary structure comprises 590 residues: ATP-dependent zinc metalloprotease FtsH 1 (590 aa).

Residues 1–8 are Cytoplasmic-facing; that stretch reads MLKLTKKQ. Residues 9-29 traverse the membrane as a helical segment; the sequence is LIIVLGIAIVVVSAIGYAVYT. Over 30 to 103 the chain is Extracellular; it reads QYFNEDKLEI…QVRETTDQYS (74 aa). Residues 104–124 traverse the membrane as a helical segment; the sequence is VVQVITFVVLIGGFIGVAIFL. At 125 to 590 the chain is on the cytoplasmic side; it reads SKKNATQTSK…NEIFSGFQSM (466 aa). Residue 195-202 participates in ATP binding; that stretch reads GSPGTGKT. His418 serves as a coordination point for Zn(2+). Glu419 is a catalytic residue. His422 and Asp496 together coordinate Zn(2+).

It in the central section; belongs to the AAA ATPase family. This sequence in the C-terminal section; belongs to the peptidase M41 family. As to quaternary structure, homohexamer. Requires Zn(2+) as cofactor.

The protein localises to the cell membrane. Acts as a processive, ATP-dependent zinc metallopeptidase for both cytoplasmic and membrane proteins. Plays a role in the quality control of integral membrane proteins. This is ATP-dependent zinc metalloprotease FtsH 1 from Alkaliphilus metalliredigens (strain QYMF).